The chain runs to 320 residues: Cytochrome f (320 aa).

The first 35 residues, 1–35 (MENRNTFSWVKEQMTRSISVSIMIYVITRTSISNA), serve as a signal peptide directing secretion. 4 residues coordinate heme: Y36, C56, C59, and H60. A helical transmembrane segment spans residues 286-306 (VQGLLFFFASVILAQVFLVLK).

Belongs to the cytochrome f family. As to quaternary structure, the 4 large subunits of the cytochrome b6-f complex are cytochrome b6, subunit IV (17 kDa polypeptide, petD), cytochrome f and the Rieske protein, while the 4 small subunits are PetG, PetL, PetM and PetN. The complex functions as a dimer. Requires heme as cofactor.

It localises to the plastid. It is found in the chloroplast thylakoid membrane. In terms of biological role, component of the cytochrome b6-f complex, which mediates electron transfer between photosystem II (PSII) and photosystem I (PSI), cyclic electron flow around PSI, and state transitions. The protein is Cytochrome f of Oryza nivara (Indian wild rice).